The primary structure comprises 207 residues: Histone H1-like protein HC2 (207 aa).

Basic residues-rich tracts occupy residues 1–50 (MLGV…KTVA) and 59–72 (PAAKKTAAKKAPVR). The disordered stretch occupies residues 1–72 (MLGVQKKRST…KTAAKKAPVR (72 aa)). Repeat copies occupy residues 35–58 (VRKVAAKKTVARKTVAKKAVAARK), 71–94 (VRKVAAKKTVARKTVAKKAVAARK), and 113–136 (VRKVAAKKTVARKTVAKKAVAARK). The interval 35–136 (VRKVAAKKTV…VAKKAVAARK (102 aa)) is 3 X 24 AA repeats of V-R-K-V-A-A-K-K-T-V-A-R-K-T-V-A-K-K-A-V-A-A-R-K.

It belongs to the histone H1/H5 family. HCT subfamily.

Functionally, might have a role in establishing the nucleoid structure of elementary bodies. The sequence is that of Histone H1-like protein HC2 (hctB) from Chlamydia muridarum (strain MoPn / Nigg).